The sequence spans 218 residues: Peroxynitrite isomerase 2 (218 aa).

The interval 1–24 (MTPAGDTPERGSGDRAVAEAAERA) is disordered. The segment covering 7–24 (TPERGSGDRAVAEAAERA) has biased composition (basic and acidic residues). The GXWXGXG signature appears at 65–71 (GVWRGEG). Heme b-binding residues include Lys181 and His208.

The protein belongs to the nitrobindin family. As to quaternary structure, homodimer. Heme b serves as cofactor.

It carries out the reaction peroxynitrite = nitrate. The protein operates within nitrogen metabolism. Heme-binding protein able to scavenge peroxynitrite and to protect free L-tyrosine against peroxynitrite-mediated nitration, by acting as a peroxynitrite isomerase that converts peroxynitrite to nitrate. Therefore, this protein likely plays a role in peroxynitrite sensing and in the detoxification of reactive nitrogen and oxygen species (RNS and ROS, respectively). Is able to bind nitric oxide (NO) in vitro, but may act as a sensor of peroxynitrite levels in vivo. The chain is Peroxynitrite isomerase 2 from Mycolicibacterium smegmatis (strain ATCC 700084 / mc(2)155) (Mycobacterium smegmatis).